A 337-amino-acid polypeptide reads, in one-letter code: NADH-quinone oxidoreductase subunit H (337 aa).

The next 8 membrane-spanning stretches (helical) occupy residues 13–33, 82–102, 115–135, 154–174, 187–207, 248–268, 274–294, and 313–333; these read IIIVLQCLAIILPMLGAIAYL, AVFIIAPLMTFILALIAWAVI, VGVLYLFAVSGLGVYGIIMAG, MVSYEVAMGLIIIAVILSAGS, GVWYFIPHFPMFVMFLVSILA, ILMSGITAILFLGGWLPPVDI, IPGIIWFFLKIALILFVFLWV, and VFLPGSLIWVVLTAGFLVTFD.

This sequence belongs to the complex I subunit 1 family. In terms of assembly, NDH-1 is composed of 14 different subunits. Subunits NuoA, H, J, K, L, M, N constitute the membrane sector of the complex.

It is found in the cell inner membrane. The catalysed reaction is a quinone + NADH + 5 H(+)(in) = a quinol + NAD(+) + 4 H(+)(out). Functionally, NDH-1 shuttles electrons from NADH, via FMN and iron-sulfur (Fe-S) centers, to quinones in the respiratory chain. The immediate electron acceptor for the enzyme in this species is believed to be ubiquinone. Couples the redox reaction to proton translocation (for every two electrons transferred, four hydrogen ions are translocated across the cytoplasmic membrane), and thus conserves the redox energy in a proton gradient. This subunit may bind ubiquinone. The polypeptide is NADH-quinone oxidoreductase subunit H (Rhodospirillum rubrum (strain ATCC 11170 / ATH 1.1.1 / DSM 467 / LMG 4362 / NCIMB 8255 / S1)).